Consider the following 513-residue polypeptide: Pantetheinase (513 aa).

Positions 1 to 22 (MITSPLLAYVAILFFCVLKASS) are cleaved as a signal peptide. Residues 40–307 (APLTPVSHEE…GKLLLSQLDS (268 aa)) enclose the CN hydrolase domain. The active-site Proton acceptor is the Glu80. Asn147 carries an N-linked (GlcNAc...) asparagine glycan. The Proton donor role is filled by Lys179. Residue Cys212 is the Nucleophile of the active site. Residues Asn315 and Asn353 are each glycosylated (N-linked (GlcNAc...) asparagine). Residue Gly487 is the site of GPI-anchor amidated glycine attachment. Residues 488–513 (ASADLVAQGLRVMLGVIITIMYSLSW) constitute a propeptide, removed in mature form.

This sequence belongs to the carbon-nitrogen hydrolase superfamily. BTD/VNN family. In terms of assembly, monomer. Detected in kidney (at protein level).

It is found in the cell membrane. The catalysed reaction is (R)-pantetheine + H2O = cysteamine + (R)-pantothenate. Functionally, amidohydrolase that hydrolyzes specifically one of the carboamide linkages in D-pantetheine thus recycling pantothenic acid (vitamin B5) and releasing cysteamine. This chain is Pantetheinase (VNN1), found in Sus scrofa (Pig).